A 292-amino-acid polypeptide reads, in one-letter code: Coiled-coil domain-containing protein 137 (292 aa).

The span at 1-16 (MAGLRRGAAAVAPAGT) shows a compositional bias: low complexity. Disordered regions lie at residues 1–94 (MAGL…AQAA), 139–183 (FLSK…EKAA), 205–243 (PELT…LTTS), and 263–292 (ALKR…EMQL). 3 stretches are compositionally biased toward basic and acidic residues: residues 57-78 (KNQD…RQEM), 155-164 (PKKEKSERKK), and 173-183 (KARQRREEKAA). The stretch at 156 to 194 (KKEKSERKKAFQKRRLDKARQRREEKAAERLEQELLQDT) forms a coiled coil. Low complexity predominate over residues 222–232 (KKSLMLKKLLS). A Phosphoserine modification is found at Ser-232. Polar residues predominate over residues 234–243 (GSVSQPLTTS). Residues 247 to 276 (QRIVAEERERAVNAYRALKRLQQQRQETQS) adopt a coiled-coil conformation.

It localises to the chromosome. The sequence is that of Coiled-coil domain-containing protein 137 (CCDC137) from Bos taurus (Bovine).